A 528-amino-acid polypeptide reads, in one-letter code: Sulfhydryl oxidase 1 (528 aa).

Positions Met-1–Ala-19 are cleaved as a signal peptide. The 136-residue stretch at Asn-35–Gly-170 folds into the Thioredoxin domain. An N-linked (GlcNAc...) asparagine glycan is attached at Asn-47. Active-site nucleophile residues include Cys-72 and Cys-75. A disulfide bond links Cys-72 and Cys-75. 2 N-linked (GlcNAc...) asparagine glycosylation sites follow: Asn-186 and Asn-297. Cys-292 and Cys-304 form a disulfide bridge. In terms of domain architecture, ERV/ALR sulfhydryl oxidase spans Ser-295 to Trp-397. FAD is bound by residues Arg-300, Trp-307, His-311, Asp-341, His-345, Trp-368–Asn-375, Lys-394, and Trp-397. Cys-339 and Cys-342 form a disulfide bridge. A disulfide bond links Cys-403 and Cys-406.

It depends on FAD as a cofactor. As to expression, highly expressed in roots.

Its subcellular location is the secreted. The protein localises to the cell wall. It carries out the reaction 2 R'C(R)SH + O2 = R'C(R)S-S(R)CR' + H2O2. In terms of biological role, sulfhydryl oxidase involved in the regulation of cation homeostasis. Positively regulates shoot accumulation of K(+) and inhibits accumulation of toxic cations. Acts at the level of root K(+) efflux systems involved in xylem loading (root symplast-xylem interface). This is Sulfhydryl oxidase 1 (QSOX1) from Arabidopsis thaliana (Mouse-ear cress).